The sequence spans 670 residues: Transcription factor Ken 2 (670 aa).

The BTB domain maps to 108 to 176 (TDLLLICDGK…LYSGQVYVRS (69 aa)). Disordered stretches follow at residues 200–288 (SDGS…DRDR) and 307–470 (NNHP…SDDA). The span at 218 to 230 (NRNTEGITGSSVV) shows a compositional bias: polar residues. A compositionally biased stretch (basic residues) spans 325–338 (HHLHHHHHHHHRQL). Composition is skewed to gly residues over residues 351–368 (GGGSGNDGASEGGSGESG) and 389–400 (SGGGGAGSGRRS). Residues 407–419 (EPAEDDEDYELDV) are compositionally biased toward acidic residues. Polar residues predominate over residues 451 to 464 (SDPVNLSIVKQQQD). Residues 586–594 (NLKTHLRVH) form a C2H2-type 1; degenerate zinc finger. C2H2-type zinc fingers lie at residues 600–623 (FACRLCVAMFKQKAHLLKHLCSVH) and 636–658 (YTCCFCSLVFETLQELVRHLSGH).

The protein resides in the nucleus. In terms of biological role, transcription factor required for terminalia development. Negative regulator of the JAK/STAT pathway: represses JAK/STAT-dependent expression of ventral veins lacking (vvl) in the posterior spiracles. This is Transcription factor Ken 2 from Culex quinquefasciatus (Southern house mosquito).